The chain runs to 138 residues: Putative nickel-responsive regulator (138 aa).

Ni(2+) contacts are provided by histidine 76, histidine 87, histidine 89, and cysteine 95.

Belongs to the transcriptional regulatory CopG/NikR family. Ni(2+) is required as a cofactor.

Functionally, transcriptional regulator. This chain is Putative nickel-responsive regulator, found in Pseudomonas putida (strain W619).